Reading from the N-terminus, the 234-residue chain is UPF0173 metal-dependent hydrolase Rleg2_1519 (234 aa).

Belongs to the UPF0173 family.

This is UPF0173 metal-dependent hydrolase Rleg2_1519 from Rhizobium leguminosarum bv. trifolii (strain WSM2304).